Consider the following 507-residue polypeptide: MATLRVDEIHKILRERIEQYNRKVGIENIGRVVQVGDGIARIIGLGEIMSGELVEFAEGTRGIALNLESKNVGIVLMGDGLMIQEGSFVKATGRIAQIPVSEAYLGRVINALAKPIDGRGEIVASESRLIESPAPGIISRRSVYEPLQTGLIAIDSMIPIGRGQRELIIGDRQTGKTAVATDTILNQKGQDVICVYVAIGQRASSVAQVVTTFHEEGAMEYTIVVAEMADSPATLQYLAPYTGAALAEYFMYRERHTLIIYDDLSKQAQAYRQMSLLLRRPPGREAYPGDVFYLHSRLLERAAKLNSLLGEGSMTALPIVETQSGDVSAYIPTNVISITDGQIFLSADLFNAGIRPAINVGISVSRVGSAAQIKAMKQVAGKSKLELAQFAELQAFAQFASALDKTSQNQLARGRRLRELLKQSQANPLPVEEQIATIYIGTRGYLDSLEIGQVKKFLDELRKHLKDTKPQFQEIISSSKTFTEEAEILLKEAIQEQLERFSLQEQT.

ATP is bound at residue 170-177; sequence GDRQTGKT.

This sequence belongs to the ATPase alpha/beta chains family. F-type ATPases have 2 components, CF(1) - the catalytic core - and CF(0) - the membrane proton channel. CF(1) has five subunits: alpha(3), beta(3), gamma(1), delta(1), epsilon(1). CF(0) has four main subunits: a, b, b' and c.

Its subcellular location is the plastid. It is found in the chloroplast thylakoid membrane. It catalyses the reaction ATP + H2O + 4 H(+)(in) = ADP + phosphate + 5 H(+)(out). Produces ATP from ADP in the presence of a proton gradient across the membrane. The alpha chain is a regulatory subunit. This Oryza nivara (Indian wild rice) protein is ATP synthase subunit alpha, chloroplastic.